Consider the following 347-residue polypeptide: DNA-directed RNA polymerase subunit alpha (347 aa).

The segment at 1-226 (MLISQRPTLS…ELFGLARELN (226 aa)) is alpha N-terminal domain (alpha-NTD). Residues 243–347 (HIASFALPID…SQDYAETEQL (105 aa)) are alpha C-terminal domain (alpha-CTD). The tract at residues 326 to 347 (TTGTWSTDGAYDSQDYAETEQL) is disordered.

The protein belongs to the RNA polymerase alpha chain family. Homodimer. The RNAP catalytic core consists of 2 alpha, 1 beta, 1 beta' and 1 omega subunit. When a sigma factor is associated with the core the holoenzyme is formed, which can initiate transcription.

The enzyme catalyses RNA(n) + a ribonucleoside 5'-triphosphate = RNA(n+1) + diphosphate. Functionally, DNA-dependent RNA polymerase catalyzes the transcription of DNA into RNA using the four ribonucleoside triphosphates as substrates. This is DNA-directed RNA polymerase subunit alpha from Mycobacterium leprae (strain TN).